The primary structure comprises 267 residues: Flap endonuclease Xni (267 aa).

D115 lines the Mg(2+) pocket. The 5'-3' exonuclease domain maps to 171 to 261; the sequence is VAPAQLVDFW…LGFNLREIRY (91 aa). Residues L182, V193, and I196 each contribute to the K(+) site. Positions 195–200 are interaction with DNA; the sequence is GIGPKT.

The protein belongs to the Xni family. It depends on Mg(2+) as a cofactor. The cofactor is K(+).

Functionally, has flap endonuclease activity. During DNA replication, flap endonucleases cleave the 5'-overhanging flap structure that is generated by displacement synthesis when DNA polymerase encounters the 5'-end of a downstream Okazaki fragment. The chain is Flap endonuclease Xni from Aeromonas hydrophila subsp. hydrophila (strain ATCC 7966 / DSM 30187 / BCRC 13018 / CCUG 14551 / JCM 1027 / KCTC 2358 / NCIMB 9240 / NCTC 8049).